The sequence spans 327 residues: Nucleotide-binding protein Mflv_3714 (327 aa).

Basic and acidic residues predominate over residues 1–22 (MTRQGMRDDLRGEADSVVHDGT). The segment at 1–29 (MTRQGMRDDLRGEADSVVHDGTDDIDNEN) is disordered. 50–57 (GLSGAGRG) serves as a coordination point for ATP. A GTP-binding site is contributed by 101 to 104 (DVRS).

The protein belongs to the RapZ-like family.

In terms of biological role, displays ATPase and GTPase activities. The chain is Nucleotide-binding protein Mflv_3714 from Mycolicibacterium gilvum (strain PYR-GCK) (Mycobacterium gilvum (strain PYR-GCK)).